The primary structure comprises 261 residues: tRNA pseudouridine synthase A (261 aa).

The Nucleophile role is filled by Asp-51. Residue Tyr-109 participates in substrate binding.

The protein belongs to the tRNA pseudouridine synthase TruA family. As to quaternary structure, homodimer.

The enzyme catalyses uridine(38/39/40) in tRNA = pseudouridine(38/39/40) in tRNA. Functionally, formation of pseudouridine at positions 38, 39 and 40 in the anticodon stem and loop of transfer RNAs. This Idiomarina loihiensis (strain ATCC BAA-735 / DSM 15497 / L2-TR) protein is tRNA pseudouridine synthase A.